The following is a 159-amino-acid chain: Large ribosomal subunit protein mL50 (159 aa).

Belongs to the mitochondrion-specific ribosomal protein mL50 family. As to quaternary structure, component of the mitochondrial ribosome large subunit (39S) which comprises a 16S rRNA and about 50 distinct proteins.

It localises to the mitochondrion. The sequence is that of Large ribosomal subunit protein mL50 (Mrpl50) from Mus musculus (Mouse).